Reading from the N-terminus, the 248-residue chain is Pyridoxine 5'-phosphate synthase (248 aa).

N12 is a 3-amino-2-oxopropyl phosphate binding site. 14 to 15 (DH) contacts 1-deoxy-D-xylulose 5-phosphate. R23 contacts 3-amino-2-oxopropyl phosphate. H48 (proton acceptor) is an active-site residue. 1-deoxy-D-xylulose 5-phosphate-binding residues include R50 and H55. E75 (proton acceptor) is an active-site residue. T105 provides a ligand contact to 1-deoxy-D-xylulose 5-phosphate. The active-site Proton donor is H196. 3-amino-2-oxopropyl phosphate-binding positions include G197 and 218 to 219 (GH).

Belongs to the PNP synthase family. As to quaternary structure, homooctamer; tetramer of dimers.

The protein localises to the cytoplasm. It carries out the reaction 3-amino-2-oxopropyl phosphate + 1-deoxy-D-xylulose 5-phosphate = pyridoxine 5'-phosphate + phosphate + 2 H2O + H(+). It participates in cofactor biosynthesis; pyridoxine 5'-phosphate biosynthesis; pyridoxine 5'-phosphate from D-erythrose 4-phosphate: step 5/5. In terms of biological role, catalyzes the complicated ring closure reaction between the two acyclic compounds 1-deoxy-D-xylulose-5-phosphate (DXP) and 3-amino-2-oxopropyl phosphate (1-amino-acetone-3-phosphate or AAP) to form pyridoxine 5'-phosphate (PNP) and inorganic phosphate. The polypeptide is Pyridoxine 5'-phosphate synthase (Pseudomonas aeruginosa (strain LESB58)).